We begin with the raw amino-acid sequence, 462 residues long: U2 small nuclear ribonucleoprotein auxiliary factor 35 kDa subunit-related protein 2 (462 aa).

Residues 1–13 are compositionally biased toward low complexity; that stretch reads METAGATADATAG. Disordered stretches follow at residues 1–22, 44–66, and 115–138; these read META…RKKY, AELA…EEER, and WEEQ…EREE. Residue lysine 49 forms a Glycyl lysine isopeptide (Lys-Gly) (interchain with G-Cter in SUMO2) linkage. The segment covering 57–66 has biased composition (basic and acidic residues); the sequence is AEEKRLEEER. The C3H1-type 1 zinc finger occupies 170–198; sequence EKDRANCPFYSKTGACRFGDRCSRKHNFP. Residues 202 to 308 form the RRM domain; it reads PTLLIKGMFT…RQLQCEFCPV (107 aa). Residues 310 to 337 form a C3H1-type 2 zinc finger; that stretch reads RWKMAICGLFEVQQCPRGKHCNFLHVFR. Serine 353 carries the phosphoserine modification. The tract at residues 354-462 is disordered; sequence PDWTSSSFGK…QPQPQPQSDP (109 aa). Over residues 364 to 379 the composition is skewed to basic and acidic residues; that stretch reads NSERRERASHYDEYYG. Serine 389 is subject to Phosphoserine. Residues 392 to 403 are compositionally biased toward basic and acidic residues; sequence FYKRNGESDRKS. The segment covering 404–417 has biased composition (basic residues); the sequence is SSRHRVKKSHRYGM.

In terms of assembly, component of the U11/U12 snRNPs that are part of the U12-type spliceosome. Interacts (via RS domain) with SRSF1 and SRSF2. Interacts with U2AF2/U2AF65. Post-translationally, phosphorylated in the RS domain by SRPK1.

Its subcellular location is the nucleus. Pre-mRNA-binding protein required for splicing of both U2- and U12-type introns. Selectively interacts with the 3'-splice site of U2- and U12-type pre-mRNAs and promotes different steps in U2 and U12 intron splicing. Recruited to U12 pre-mRNAs in an ATP-dependent manner and is required for assembly of the prespliceosome, a precursor to other spliceosomal complexes. For U2-type introns, it is selectively and specifically required for the second step of splicing. In Mus musculus (Mouse), this protein is U2 small nuclear ribonucleoprotein auxiliary factor 35 kDa subunit-related protein 2 (Zrsr2).